Here is a 103-residue protein sequence, read N- to C-terminus: MYAVFQSGGKQHRVAEGQTVRLEKIEVAPGETVEFDKVLMVSNGDDVKIGTPIVAGGKVTAEVVTHGRGDKVKIVKFRRRKHSRKQAGHRQWFTEVKITGINA.

Belongs to the bacterial ribosomal protein bL21 family. As to quaternary structure, part of the 50S ribosomal subunit. Contacts protein L20.

This protein binds to 23S rRNA in the presence of protein L20. In Alteromonas mediterranea (strain DSM 17117 / CIP 110805 / LMG 28347 / Deep ecotype), this protein is Large ribosomal subunit protein bL21.